The primary structure comprises 513 residues: ATP synthase subunit alpha (513 aa).

ATP is bound at residue 169 to 176 (GDRQTGKT).

This sequence belongs to the ATPase alpha/beta chains family. In terms of assembly, F-type ATPases have 2 components, CF(1) - the catalytic core - and CF(0) - the membrane proton channel. CF(1) has five subunits: alpha(3), beta(3), gamma(1), delta(1), epsilon(1). CF(0) has three main subunits: a(1), b(2) and c(9-12). The alpha and beta chains form an alternating ring which encloses part of the gamma chain. CF(1) is attached to CF(0) by a central stalk formed by the gamma and epsilon chains, while a peripheral stalk is formed by the delta and b chains.

It is found in the cell inner membrane. It catalyses the reaction ATP + H2O + 4 H(+)(in) = ADP + phosphate + 5 H(+)(out). In terms of biological role, produces ATP from ADP in the presence of a proton gradient across the membrane. The alpha chain is a regulatory subunit. The sequence is that of ATP synthase subunit alpha from Tolumonas auensis (strain DSM 9187 / NBRC 110442 / TA 4).